The primary structure comprises 1057 residues: MASEFGILLTNQIYDQTYEKEMCDVIITAENAVRRVEVAGVHGYEWGATNHRLGLCEVENTKSIGRMIYEQIRCEGAYPIFPHYITDTLKYGKSIDRNDNQIRVDRDDERVRKIKIQPYFGEMYFSPENYITVFCKRQAISGQIEVSRSIIGRRMKYEESAEQTKGTINANKYRLLEKWRDLAYEQIEIERDNERCLTHNTDPIYQLIKKMRYGMMYPVHYMLNDRYKVVQERADMGVEKWLLQKIGRGTQRRKADDGDNDALLQLERMMSSEELERSVIESVIRFGSLYNAHAGKKTGDIPLEVLIKYCDSLTTFVHKKNREGGDNQTARDEIRRAVVKNIPSMKQENQMKVTPNIRNFLFFAYLNGFKRNNGVDIDPNNGTWSKHKAEVKKFLNEEQKKNENKPLKVLIDGAYISTDAEYGTVAHWVDWVVDIVMMTQVSRMIKEYNFIRLKKDQLISGMNKLEDGVKCYAYCLILALYDFHGRDVDGFAQGTRTAAIVETVARMFPDFRSEVSEKFGIDLAVSEESDELFVKKTMVSSFSDSGEMGYKFIFGWRKTDFKVETDYGEIVSDEVHRLYQAILDGKEWSKEVDDPEKYFVDDLYNRCPESIYVRNGVDPNNKIMIKKRGLVGESQRIFLRDLSHIGMNFKKLLLRLSSKRLHARGEHIQYHEIDVEDFKPCAIAELGLHCSTYIYQDLLVGANRGEYVKDAKELVWFDIANTNFNITRPFDRCWPSSCAEAELSLRFHLITKIFTRYRGERTSFVDIINELSEHGYVKHNFPSYKHYYLSVIQTVFEDQRAIDPLDFCAMISRNETRESTLKGFSMFTAIVKSERLIDTLFLNFLLWIVFEMENVDVSAANKRHPLLISHEKGLRLIGVDLFNGALSISTGGWIPYLERICSEEKAQRRLNADELKIKSWFLTYYMNLSLERRAEPRMSFKFEGLTTWIGSNCGGVRDYVVQALPMRKPKPGLLMIIYGDDGDARWVEWAMKNFTAVDGSLGFIYIDRHKLVNKSDFRVREMKIYNRGRLDRLILISSGHYTFGNKFLMSKLLAKTE.

The protein belongs to the orbivirus VP2 family.

The protein resides in the virion. Its function is as follows. The VP2 protein is one of the two proteins (with VP5) which constitute the virus particle outer capsid. It is the major target of the host immunogenic response. This Anas (ducks) protein is Outer capsid protein VP2 (Segment-2).